The sequence spans 219 residues: Ras-related protein Rab-32A (219 aa).

22 to 29 (GDIGTGKT) serves as a coordination point for GTP. The Effector region motif lies at 44–52 (YKSTIGVDF). GTP is bound by residues 71-75 (DIAGQ) and 134-137 (NKCD). A disordered region spans residues 192–219 (NQPIEGTIQPGDLNKQPQPTSTGPSCCK). Over residues 206 to 219 (KQPQPTSTGPSCCK) the composition is skewed to polar residues. S-geranylgeranyl cysteine attachment occurs at residues Cys217 and Cys218.

It belongs to the small GTPase superfamily. Rab family.

The chain is Ras-related protein Rab-32A (rab32A) from Dictyostelium discoideum (Social amoeba).